The chain runs to 55 residues: DNA-binding protein (55 aa).

Positions 1–55 (MVYRRRRRSSTGTTYGSTRRRRSSGYRRRPGRPRTYRRSRSRSSTGRRSYRTRYY) are disordered. A run of 2 repeats spans residues 5-10 (RRRRSS) and 19-24 (RRRRSS). Residues 5–24 (RRRRSSTGTTYGSTRRRRSS) form a 2 X 6 AA repeats of R-R-R-R-S-S region. Basic residues predominate over residues 18–41 (TRRRRSSGYRRRPGRPRTYRRSRS).

As to quaternary structure, interacts with protein AC132. Phosphorylated.

The protein resides in the virion. It localises to the host cytoplasm. In terms of biological role, plays a role in viral DNA packaging and nucleocapsid assembly. Promotes viral gene transcription during the late stage of infection while it is non-essential for the basal level of viral gene transcription. This chain is DNA-binding protein (P6.9), found in Lepidoptera (butterflies and moths).